A 159-amino-acid polypeptide reads, in one-letter code: MSNLNLATLDISEHANLPTSSEVLFKAKADKKLSFESIAAAIGRNEVATAAIFYGQAKASEEDIAKLAQVLEIDHAHLESLLSGFPDRGKSVSFPPKDPLIYRLYEIVQNYGYAYKAVMNEKFGDGIMSAISFSTTVEKETDKDGNNWAVVTWRGKWYV.

Catalysis depends on residues R103, E106, and S129.

The protein belongs to the cyanase family.

It carries out the reaction cyanate + hydrogencarbonate + 3 H(+) = NH4(+) + 2 CO2. Catalyzes the reaction of cyanate with bicarbonate to produce ammonia and carbon dioxide. The sequence is that of Cyanate hydratase from Blastomyces gilchristii (strain SLH14081) (Blastomyces dermatitidis).